A 317-amino-acid polypeptide reads, in one-letter code: Cytochrome f (317 aa).

An N-terminal signal peptide occupies residues 1–34 (MINFKKQIMKKTTFFLCAMLLVSSILIAPRSSLA). Heme contacts are provided by Tyr35, Cys55, Cys58, and His59. Residues 284–304 (IIGLIAFFIGVGLTQILLVLK) traverse the membrane as a helical segment.

The protein belongs to the cytochrome f family. The 4 large subunits of the cytochrome b6-f complex are cytochrome b6, subunit IV (17 kDa polypeptide, PetD), cytochrome f and the Rieske protein, while the 4 small subunits are PetG, PetL, PetM and PetN. The complex functions as a dimer. It depends on heme as a cofactor.

The protein resides in the cellular thylakoid membrane. Its function is as follows. Component of the cytochrome b6-f complex, which mediates electron transfer between photosystem II (PSII) and photosystem I (PSI), cyclic electron flow around PSI, and state transitions. This chain is Cytochrome f, found in Prochlorococcus marinus (strain MIT 9515).